The chain runs to 236 residues: Putative glutamine amidotransferase-like protein YvdE (236 aa).

The Glutamine amidotransferase type-1 domain maps to 17–236 (SPFWWNKVSY…IFEIFANGTI (220 aa)).

The polypeptide is Putative glutamine amidotransferase-like protein YvdE (yvdE) (Lactococcus lactis subsp. lactis (strain IL1403) (Streptococcus lactis)).